Reading from the N-terminus, the 162-residue chain is Regulator of ribonuclease activity A (162 aa).

It belongs to the RraA family. As to quaternary structure, homotrimer. Binds to both RNA-binding sites in the C-terminal region of Rne and to RhlB.

The protein localises to the cytoplasm. Its function is as follows. Globally modulates RNA abundance by binding to RNase E (Rne) and regulating its endonucleolytic activity. Can modulate Rne action in a substrate-dependent manner by altering the composition of the degradosome. Modulates RNA-binding and helicase activities of the degradosome. The sequence is that of Regulator of ribonuclease activity A from Haemophilus influenzae (strain ATCC 51907 / DSM 11121 / KW20 / Rd).